We begin with the raw amino-acid sequence, 272 residues long: GTP cyclohydrolase FolE2 (272 aa).

Belongs to the GTP cyclohydrolase IV family.

The catalysed reaction is GTP + H2O = 7,8-dihydroneopterin 3'-triphosphate + formate + H(+). The protein operates within cofactor biosynthesis; 7,8-dihydroneopterin triphosphate biosynthesis; 7,8-dihydroneopterin triphosphate from GTP: step 1/1. Its function is as follows. Converts GTP to 7,8-dihydroneopterin triphosphate. This chain is GTP cyclohydrolase FolE2, found in Aromatoleum aromaticum (strain DSM 19018 / LMG 30748 / EbN1) (Azoarcus sp. (strain EbN1)).